Here is a 127-residue protein sequence, read N- to C-terminus: Large ribosomal subunit protein uL22c (127 aa).

It belongs to the universal ribosomal protein uL22 family. Part of the 50S ribosomal subunit.

The protein resides in the plastid. Its subcellular location is the chloroplast. Its function is as follows. This protein binds specifically to 23S rRNA. The globular domain of the protein is located near the polypeptide exit tunnel on the outside of the subunit, while an extended beta-hairpin is found that lines the wall of the exit tunnel in the center of the 70S ribosome. The polypeptide is Large ribosomal subunit protein uL22c (rpl22) (Acorus calamus var. americanus (American sweet flag)).